The chain runs to 401 residues: MLRWITAGESHGRALVAVLEGMVAGVEITSTDISEQLARRRLGYGRGARMSFERDAVSVLSGVRHGLTLGGPIAVEIGNTEWPKWETVMATDPVDPAQLADSARNAPLTRPRPGHADYAGMLKYGFDDARPVLERASARETAARVAAGTIARSFLRQALGVEVLSHVIAIGPSAPYEGPPPGPGDLPAIDASPVRAYDEAAEQAMIAEIEAAKKDGDTLGGVVEVVALGLPVGLGSFTSGDNRLDGQLAAAVMGIQAIKGVEIGDGFATARRRGSQAHDEMYPGPDGVVRSTNRAGGLEGGMTNGQPLRVRAAMKPISTVPRALATVDMATGDEAVAIHQRSDVCAVPAAGVVVEAMVALVLARAALQKFGGDSLAETRRNIDAYRRAVAEREAPAARGTA.

Residues Arg40 and Arg46 each coordinate NADP(+). FMN is bound by residues 135–137, 256–257, Gly300, 315–319, and Arg341; these read RAS, QA, and KPIST.

The protein belongs to the chorismate synthase family. As to quaternary structure, homotetramer. FMNH2 is required as a cofactor.

The catalysed reaction is 5-O-(1-carboxyvinyl)-3-phosphoshikimate = chorismate + phosphate. The protein operates within metabolic intermediate biosynthesis; chorismate biosynthesis; chorismate from D-erythrose 4-phosphate and phosphoenolpyruvate: step 7/7. Its function is as follows. Catalyzes the anti-1,4-elimination of the C-3 phosphate and the C-6 proR hydrogen from 5-enolpyruvylshikimate-3-phosphate (EPSP) to yield chorismate, which is the branch point compound that serves as the starting substrate for the three terminal pathways of aromatic amino acid biosynthesis. This reaction introduces a second double bond into the aromatic ring system. The polypeptide is Chorismate synthase (Mycobacterium avium (strain 104)).